A 501-amino-acid polypeptide reads, in one-letter code: Dipeptide and tripeptide permease A (501 aa).

Residues 1-21 (MSTANKKPTESVSLNAFKQPK) lie on the Cytoplasmic side of the membrane. A helical transmembrane segment spans residues 22 to 44 (AFYLIFSIELWERFGYYGLQGIM). Residues 45 to 59 (AVYLVKQLGMSEADS) lie on the Periplasmic side of the membrane. A helical membrane pass occupies residues 60–80 (ITLFSSFSALVYGLVAIGGWL). Over 81-89 (GDKILGTKR) the chain is Cytoplasmic. A helical membrane pass occupies residues 90–110 (VIMLGAVVLAIGYALVAWSGH). Position 111 (aspartate 111) is a topological domain, periplasmic. A helical membrane pass occupies residues 112-132 (AGIVYMGMAAIAVGNGLFKAN). Over 133–153 (PSSLLSTCYAKDDPRLDGAFT) the chain is Cytoplasmic. Residues 154-174 (MYYMSVNIGSFFSMLATPWLA) traverse the membrane as a helical segment. Topologically, residues 175–178 (ARYG) are periplasmic. The chain crosses the membrane as a helical span at residues 179 to 199 (WSTAFALSVVGMLITVVNFAF). Topologically, residues 200–219 (CQRWVKSYGSKPDFEPINFR) are cytoplasmic. A helical transmembrane segment spans residues 220-240 (NLLLTIVGIVVLIAVATWLLH). The Periplasmic segment spans residues 241–246 (NQDIAR). A helical membrane pass occupies residues 247–267 (MVLGVIALGIVIIFGKEAFSM). Residues 268-274 (HGAARRK) are Cytoplasmic-facing. Residues 275-295 (MIVAFILMLQAIIFFVLYSQM) form a helical membrane-spanning segment. Over 296 to 320 (PTSLNFFAIRNVEHSILGIAFEPEQ) the chain is Periplasmic. The chain crosses the membrane as a helical span at residues 321 to 341 (YQALNPFWIITGSPILAAIYN). At 342-352 (RMGDTLPMPMK) the chain is on the cytoplasmic side. Residues 353 to 373 (FAIGMVLCSGAFLILPLGAKF) traverse the membrane as a helical segment. Over 374–383 (ANDAGIVSVN) the chain is Periplasmic. A helical membrane pass occupies residues 384–404 (WLIASYGLQSIGELMISGLGL). Topologically, residues 405–414 (AMVAQLVPQR) are cytoplasmic. Residues 415–435 (LMGFIMGSWFLTTAGANIIGG) traverse the membrane as a helical segment. Residues 436 to 459 (YVANLMAVPSDVTDPLMSLEVYGR) are Periplasmic-facing. The chain crosses the membrane as a helical span at residues 460–480 (VFMQIGIATAVIAVLMLLTAP). Over 481-501 (KLNRMTQDDDTAEKGSKAATV) the chain is Cytoplasmic.

This sequence belongs to the major facilitator superfamily. Proton-dependent oligopeptide transporter (POT/PTR) (TC 2.A.17) family. DtpA subfamily.

Its subcellular location is the cell inner membrane. Proton-dependent permease that transports di- and tripeptides. This Salmonella typhi protein is Dipeptide and tripeptide permease A.